The primary structure comprises 96 residues: Co-chaperonin GroES (96 aa).

It belongs to the GroES chaperonin family. As to quaternary structure, heptamer of 7 subunits arranged in a ring. Interacts with the chaperonin GroEL.

It localises to the cytoplasm. In terms of biological role, together with the chaperonin GroEL, plays an essential role in assisting protein folding. The GroEL-GroES system forms a nano-cage that allows encapsulation of the non-native substrate proteins and provides a physical environment optimized to promote and accelerate protein folding. GroES binds to the apical surface of the GroEL ring, thereby capping the opening of the GroEL channel. In Aromatoleum aromaticum (strain DSM 19018 / LMG 30748 / EbN1) (Azoarcus sp. (strain EbN1)), this protein is Co-chaperonin GroES.